Here is a 623-residue protein sequence, read N- to C-terminus: MEAEETMECLQEFPEHHKMILDRLNEQREQDRFTDITLIVDGHHFKAHKAVLAACSKFFYKFFQEFTQEPLVEIEGVSKMAFRHLIEFTYTAKLMIQGEEEANDVWKAAEFLQMLEAIKALEVRNKENSAPLEENTTGKNEAKKRKIAETSNVITESLPSAESEPVEIEVEIAEGTIEVEDEGIETLEEVASAKQSVKYIQSTGSSDDSALALLADITSKYRQGDRKGQIKEDGCPSDPTSKQVEGIEIVELQLSHVKDLFHCEKCNRSFKLFYHFKEHMKSHSTESFKCEICNKRYLRESAWKQHLNCYHLEEGGVSKKQRTGKKIHVCQYCEKQFDHFGHFKEHLRKHTGEKPFECPNCHERFARNSTLKCHLTACQTGVGAKKGRKKLYECQVCNSVFNSWDQFKDHLVIHTGDKPNHCTLCDLWFMQGNELRRHLSDAHNISERLVTEEVLSVETRVQTEPVTSMTIIEQVGKVHVLPLLQVQVDSAQVTVEQVHPDLLQDSQVHDSHMSELPEQVQVSYLEVGRIQTEEGTEVHVEELHVERVNQMPVEVQTELLEADLDHVTPEIMNQEERESSQADAAEAAREDHEDAEDLETKPTVDSEAEKAENEDRTALPVLE.

The region spanning threonine 34–glycine 98 is the BTB domain. The Nuclear localization signal 1 motif lies at threonine 137 to alanine 148. 3 consecutive C2H2-type zinc fingers follow at residues phenylalanine 261–histidine 283, phenylalanine 288–histidine 311, and histidine 328–histidine 350. Glycyl lysine isopeptide (Lys-Gly) (interchain with G-Cter in SUMO2) cross-links involve residues lysine 289 and lysine 295. The short motif at valine 317–histidine 328 is the Nuclear localization signal 2 element. The C2H2-type 4; degenerate zinc finger occupies phenylalanine 356–glycine 381. C2H2-type zinc fingers lie at residues tyrosine 392–histidine 414 and asparagine 420–histidine 443. Over residues asparagine 573–threonine 617 the composition is skewed to basic and acidic residues. The tract at residues asparagine 573 to glutamate 623 is disordered. Residue lysine 601 forms a Glycyl lysine isopeptide (Lys-Gly) (interchain with G-Cter in SUMO) linkage.

Belongs to the krueppel C2H2-type zinc-finger protein family. Monosumoylated at Lys-601 by CBX4 and UHRF2. Sumoylation may potentiate ZNF131 inhibition of estrogen signaling. Sumoylation does not interfere with ubiquitination. In terms of processing, ubiquitinated. In terms of tissue distribution, predominant expression is found in different brain areas such as the occipital and temporal lobe, the nucleus caudatus, hippocampus, and the cerebellum as well as in testis and thymus.

The protein localises to the nucleus. Functionally, plays a role during development and organogenesis as well as in the function of the adult central nervous system. May be involved in transcriptional regulation as a repressor of ESR1/ER-alpha signaling. The chain is Zinc finger protein 131 (ZNF131) from Homo sapiens (Human).